Here is a 225-residue protein sequence, read N- to C-terminus: Uracil-DNA glycosylase (225 aa).

Asp68 (proton acceptor) is an active-site residue.

The protein belongs to the uracil-DNA glycosylase (UDG) superfamily. UNG family.

It localises to the cytoplasm. It catalyses the reaction Hydrolyzes single-stranded DNA or mismatched double-stranded DNA and polynucleotides, releasing free uracil.. Its function is as follows. Excises uracil residues from the DNA which can arise as a result of misincorporation of dUMP residues by DNA polymerase or due to deamination of cytosine. The chain is Uracil-DNA glycosylase from Parafrankia sp. (strain EAN1pec).